The following is a 279-amino-acid chain: Presqualene diphosphate synthase (279 aa).

It belongs to the phytoene/squalene synthase family. HpnD subfamily.

The catalysed reaction is 2 (2E,6E)-farnesyl diphosphate = presqualene diphosphate + diphosphate. It functions in the pathway secondary metabolite biosynthesis; hopanoid biosynthesis. Involved in the biosynthesis of the hopanoid precursor squalene (SQ) from farnesyl diphosphate (FPP). Catalyzes the first step, the formation of presqualene diphosphate (PSPP) from two molecules of FPP. In Rhodopseudomonas palustris (strain ATCC BAA-98 / CGA009), this protein is Presqualene diphosphate synthase.